The following is a 429-amino-acid chain: tRNA-2-methylthio-N(6)-dimethylallyladenosine synthase (429 aa).

One can recognise an MTTase N-terminal domain in the interval 2–115; sequence KLLYLQTLGC…ISEAVKTPKF (114 aa). Residues Cys-11, Cys-46, Cys-78, Cys-147, Cys-151, and Cys-154 each coordinate [4Fe-4S] cluster. In terms of domain architecture, Radical SAM core spans 133–365; it reads RGSPYKAFVN…QSRHNEILDE (233 aa). The 62-residue stretch at 368–429 folds into the TRAM domain; the sequence is KNQVGKIFDV…RMVLYGKITA (62 aa).

The protein belongs to the methylthiotransferase family. MiaB subfamily. In terms of assembly, monomer. Requires [4Fe-4S] cluster as cofactor.

It localises to the cytoplasm. It carries out the reaction N(6)-dimethylallyladenosine(37) in tRNA + (sulfur carrier)-SH + AH2 + 2 S-adenosyl-L-methionine = 2-methylsulfanyl-N(6)-dimethylallyladenosine(37) in tRNA + (sulfur carrier)-H + 5'-deoxyadenosine + L-methionine + A + S-adenosyl-L-homocysteine + 2 H(+). In terms of biological role, catalyzes the methylthiolation of N6-(dimethylallyl)adenosine (i(6)A), leading to the formation of 2-methylthio-N6-(dimethylallyl)adenosine (ms(2)i(6)A) at position 37 in tRNAs that read codons beginning with uridine. This Campylobacter hominis (strain ATCC BAA-381 / DSM 21671 / CCUG 45161 / LMG 19568 / NCTC 13146 / CH001A) protein is tRNA-2-methylthio-N(6)-dimethylallyladenosine synthase.